We begin with the raw amino-acid sequence, 379 residues long: F420-dependent formate dehydrogenase subunit beta (379 aa).

2 consecutive 4Fe-4S ferredoxin-type domains span residues 271 to 301 and 321 to 351; these read EKWK…CSLE and IRLS…YIFH. [4Fe-4S] cluster-binding residues include cysteine 280, cysteine 283, cysteine 286, cysteine 290, cysteine 330, cysteine 333, cysteine 336, and cysteine 340.

It belongs to the FrhB family. As to quaternary structure, dimer of an alpha (FdhA) and a beta (FdhB) subunit. It depends on [4Fe-4S] cluster as a cofactor. Requires FAD as cofactor. Zn(2+) is required as a cofactor.

It catalyses the reaction oxidized coenzyme F420-(gamma-L-Glu)(n) + formate + 2 H(+) = reduced coenzyme F420-(gamma-L-Glu)(n) + CO2. In terms of biological role, catalyzes the oxidation of formate to carbon dioxide, with coenzyme F420 as the electron acceptor. This is F420-dependent formate dehydrogenase subunit beta (fdhB) from Methanocaldococcus jannaschii (strain ATCC 43067 / DSM 2661 / JAL-1 / JCM 10045 / NBRC 100440) (Methanococcus jannaschii).